Consider the following 427-residue polypeptide: Glutamate-1-semialdehyde 2,1-aminomutase (427 aa).

K267 is modified (N6-(pyridoxal phosphate)lysine).

It belongs to the class-III pyridoxal-phosphate-dependent aminotransferase family. HemL subfamily. In terms of assembly, homodimer. Pyridoxal 5'-phosphate is required as a cofactor.

The protein localises to the cytoplasm. It carries out the reaction (S)-4-amino-5-oxopentanoate = 5-aminolevulinate. Its pathway is porphyrin-containing compound metabolism; protoporphyrin-IX biosynthesis; 5-aminolevulinate from L-glutamyl-tRNA(Glu): step 2/2. The chain is Glutamate-1-semialdehyde 2,1-aminomutase from Acetivibrio thermocellus (strain ATCC 27405 / DSM 1237 / JCM 9322 / NBRC 103400 / NCIMB 10682 / NRRL B-4536 / VPI 7372) (Clostridium thermocellum).